A 349-amino-acid chain; its full sequence is 3-dehydroquinate synthase (349 aa).

Residues 63 to 68 (DGEEYK), 97 to 101 (GVIGD), 121 to 122 (TT), Lys134, Lys143, and 161 to 164 (FLTT) contribute to the NAD(+) site. Zn(2+) contacts are provided by Glu176, His235, and His252.

It belongs to the sugar phosphate cyclases superfamily. Dehydroquinate synthase family. Co(2+) is required as a cofactor. The cofactor is Zn(2+). Requires NAD(+) as cofactor.

The protein localises to the cytoplasm. It catalyses the reaction 7-phospho-2-dehydro-3-deoxy-D-arabino-heptonate = 3-dehydroquinate + phosphate. Its pathway is metabolic intermediate biosynthesis; chorismate biosynthesis; chorismate from D-erythrose 4-phosphate and phosphoenolpyruvate: step 2/7. Catalyzes the conversion of 3-deoxy-D-arabino-heptulosonate 7-phosphate (DAHP) to dehydroquinate (DHQ). This Sulfurimonas denitrificans (strain ATCC 33889 / DSM 1251) (Thiomicrospira denitrificans (strain ATCC 33889 / DSM 1251)) protein is 3-dehydroquinate synthase.